A 529-amino-acid polypeptide reads, in one-letter code: GMP synthase [glutamine-hydrolyzing] (529 aa).

The Glutamine amidotransferase type-1 domain occupies 13–204 (PVLVVDFGAQ…LLETAGLEPT (192 aa)). Cys90 serves as the catalytic Nucleophile. Active-site residues include His178 and Glu180. Residues 205–403 (WTAGNIAEQL…LGLPEEIVAR (199 aa)) form the GMPS ATP-PPase domain. Residue 233–239 (SGGVDSA) coordinates ATP.

As to quaternary structure, homodimer.

The catalysed reaction is XMP + L-glutamine + ATP + H2O = GMP + L-glutamate + AMP + diphosphate + 2 H(+). The protein operates within purine metabolism; GMP biosynthesis; GMP from XMP (L-Gln route): step 1/1. Functionally, catalyzes the synthesis of GMP from XMP. The chain is GMP synthase [glutamine-hydrolyzing] from Corynebacterium jeikeium (strain K411).